Reading from the N-terminus, the 234-residue chain is Ubiquinone biosynthesis O-methyltransferase (234 aa).

S-adenosyl-L-methionine contacts are provided by Arg-40, Gly-59, Asp-80, and Met-123.

It belongs to the methyltransferase superfamily. UbiG/COQ3 family.

The enzyme catalyses a 3-demethylubiquinol + S-adenosyl-L-methionine = a ubiquinol + S-adenosyl-L-homocysteine + H(+). It catalyses the reaction a 3-(all-trans-polyprenyl)benzene-1,2-diol + S-adenosyl-L-methionine = a 2-methoxy-6-(all-trans-polyprenyl)phenol + S-adenosyl-L-homocysteine + H(+). It participates in cofactor biosynthesis; ubiquinone biosynthesis. Its function is as follows. O-methyltransferase that catalyzes the 2 O-methylation steps in the ubiquinone biosynthetic pathway. The protein is Ubiquinone biosynthesis O-methyltransferase of Coxiella burnetii (strain Dugway 5J108-111).